A 606-amino-acid polypeptide reads, in one-letter code: 4-hydroxy-3-methylbut-2-en-1-yl diphosphate synthase (flavodoxin) (606 aa).

[4Fe-4S] cluster is bound by residues Cys-513, Cys-516, Cys-547, and Glu-554.

This sequence belongs to the IspG family. [4Fe-4S] cluster serves as cofactor.

It carries out the reaction (2E)-4-hydroxy-3-methylbut-2-enyl diphosphate + oxidized [flavodoxin] + H2O + 2 H(+) = 2-C-methyl-D-erythritol 2,4-cyclic diphosphate + reduced [flavodoxin]. Its pathway is isoprenoid biosynthesis; isopentenyl diphosphate biosynthesis via DXP pathway; isopentenyl diphosphate from 1-deoxy-D-xylulose 5-phosphate: step 5/6. Functionally, converts 2C-methyl-D-erythritol 2,4-cyclodiphosphate (ME-2,4cPP) into 1-hydroxy-2-methyl-2-(E)-butenyl 4-diphosphate. The polypeptide is 4-hydroxy-3-methylbut-2-en-1-yl diphosphate synthase (flavodoxin) (Chlamydia abortus (strain DSM 27085 / S26/3) (Chlamydophila abortus)).